A 337-amino-acid polypeptide reads, in one-letter code: Dihydroorotate dehydrogenase (quinone) (337 aa).

FMN is bound by residues 62–66 (AGLDK) and T86. K66 lines the substrate pocket. Position 111 to 115 (111 to 115 (NRFGF)) interacts with substrate. Positions 139 and 172 each coordinate FMN. Residue N172 coordinates substrate. Residue S175 is the Nucleophile of the active site. N177 lines the substrate pocket. K217 and T245 together coordinate FMN. Residue 246-247 (NT) participates in substrate binding. FMN is bound by residues G268, G297, and 318–319 (YS).

The protein belongs to the dihydroorotate dehydrogenase family. Type 2 subfamily. As to quaternary structure, monomer. It depends on FMN as a cofactor.

It localises to the cell membrane. The enzyme catalyses (S)-dihydroorotate + a quinone = orotate + a quinol. It functions in the pathway pyrimidine metabolism; UMP biosynthesis via de novo pathway; orotate from (S)-dihydroorotate (quinone route): step 1/1. Functionally, catalyzes the conversion of dihydroorotate to orotate with quinone as electron acceptor. This chain is Dihydroorotate dehydrogenase (quinone), found in Methylobacillus flagellatus (strain ATCC 51484 / DSM 6875 / VKM B-1610 / KT).